The chain runs to 400 residues: Exodeoxyribonuclease 7 large subunit (400 aa).

This sequence belongs to the XseA family. As to quaternary structure, heterooligomer composed of large and small subunits.

The protein resides in the cytoplasm. The catalysed reaction is Exonucleolytic cleavage in either 5'- to 3'- or 3'- to 5'-direction to yield nucleoside 5'-phosphates.. Functionally, bidirectionally degrades single-stranded DNA into large acid-insoluble oligonucleotides, which are then degraded further into small acid-soluble oligonucleotides. In Clostridium kluyveri (strain NBRC 12016), this protein is Exodeoxyribonuclease 7 large subunit.